Consider the following 192-residue polypeptide: Ion-translocating oxidoreductase complex subunit B (192 aa).

The interval 1–26 is hydrophobic; sequence MNTIWIAVGALTFLGLVFGAILGYAS. A 4Fe-4S domain is found at 32 to 91; the sequence is EDDPVVEKIDAILPQSQCGQCGYPGCRPYAEAVGLQGEKINRCAPGGEAVMLKIADLLNV. Residues Cys-49, Cys-52, Cys-57, Cys-74, Cys-117, Cys-120, Cys-123, Cys-127, Cys-147, Cys-150, Cys-153, and Cys-157 each contribute to the [4Fe-4S] cluster site. 2 4Fe-4S ferredoxin-type domains span residues 108–137 and 138–167; these read MLAV…GATR and AMHT…LRPV.

It belongs to the 4Fe4S bacterial-type ferredoxin family. RnfB subfamily. In terms of assembly, the complex is composed of six subunits: RsxA, RsxB, RsxC, RsxD, RsxE and RsxG. The cofactor is [4Fe-4S] cluster.

It localises to the cell inner membrane. Its function is as follows. Part of a membrane-bound complex that couples electron transfer with translocation of ions across the membrane. Required to maintain the reduced state of SoxR. This chain is Ion-translocating oxidoreductase complex subunit B, found in Salmonella arizonae (strain ATCC BAA-731 / CDC346-86 / RSK2980).